The following is a 1741-amino-acid chain: Protein wings apart-like (1741 aa).

Disordered regions lie at residues 68–100, 119–277, 291–472, 490–612, 675–810, 823–963, 1038–1068, 1112–1141, and 1708–1741; these read SPSQSPASTQDHDPNDLSVSVPEPPKPKKFFKS, CGAG…EVAA, SSTF…KPPK, KAAA…VQED, LAVL…ASVN, KAEA…QRGA, AAGKSDGDFGDSPSSNNNGSSSACSSASTLR, SAAGASAGGTGATTGGGGATGGGGPVRVDR, and TSSTTVGSGSAPSSTSATGTTRAPRVYKTYSSHR. A compositionally biased stretch (basic residues) spans 165–174; that stretch reads RKRKSPKKKA. Over residues 175-185 the composition is skewed to low complexity; it reads ATTSASTPSTP. Thr258 carries the post-translational modification Phosphothreonine. Low complexity predominate over residues 309–334; it reads APSASASTSSQLPSASGSASNPPSAS. A Phosphoserine modification is found at Ser355. Over residues 367 to 377 the composition is skewed to polar residues; that stretch reads AHQNQLNQLSV. A compositionally biased stretch (low complexity) spans 408–426; the sequence is AADSVDGSSAAVGGASAGD. The segment covering 438–456 has biased composition (acidic residues); that stretch reads PNEDEEEEEEEEDEEEEPP. A compositionally biased stretch (basic residues) spans 503–512; that stretch reads SRSKKHKHKQ. 2 stretches are compositionally biased toward low complexity: residues 515-529 and 553-568; these read AAGSGAAPASGATPA and QHTPSHLHQLHQLHPQ. The span at 586 to 604 shows a compositional bias: polar residues; it reads SQSSVLGSISSKGNSTPQL. Composition is skewed to low complexity over residues 796–810 and 849–859; these read NAAARANNNNLASVN and QQVTQVLQQEP. The span at 860–873 shows a compositional bias: acidic residues; the sequence is VPEEQETPDAEEEQ. A compositionally biased stretch (basic and acidic residues) spans 880-894; the sequence is PHTDHREHSPDHDPD. Ser888 carries the post-translational modification Phosphoserine. Low complexity-rich tracts occupy residues 939 to 952 and 1047 to 1065; these read GAANAGAGGAAAAA and GDSPSSNNNGSSSACSSAS. Residues 1117-1136 are compositionally biased toward gly residues; that stretch reads SAGGTGATTGGGGATGGGGP. A WAPL domain is found at 1140-1648; that stretch reads DRKTKDYYPV…EKYHTFMNLT (509 aa). Positions 1708–1730 are enriched in low complexity; the sequence is TSSTTVGSGSAPSSTSATGTTRA.

Belongs to the WAPL family.

Functionally, has a role in female meiotic chromosome segregation in females; proximal heterochromatin is involved in chromosome pairing during female meiosis. Is a dominant suppressor of both white and Stubble position-effect variegation (PEV), while it is a weak enhancer of brown variegation. The chain is Protein wings apart-like from Drosophila melanogaster (Fruit fly).